Reading from the N-terminus, the 501-residue chain is Inactive cytidine monophosphate-N-acetylneuraminic acid hydroxylase (501 aa).

Belongs to the CMP-Neu5Ac hydroxylase family. In terms of tissue distribution, widely expressed. Highly expressed in thymus. Not expressed in brain. May be expressed in adult stem cells (at protein level).

It is found in the cytoplasm. Functionally, sialic acids are components of carbohydrate chains of glycoconjugates and are involved in cell-cell recognition and cell-pathogen interactions. That protein has no CMP-N-acetylneuraminate monooxygenase activity and is not able to convert CMP-N-acetylneuraminic acid (CMP-Neu5Ac) into its hydroxylated derivative CMP-N-glycolylneuraminic acid (CMP-Neu5Gc), a sialic acid abundantly expressed at the surface of many cells in vertebrates. However, it may play a role in Wnt signaling. The polypeptide is Inactive cytidine monophosphate-N-acetylneuraminic acid hydroxylase (CMAHP) (Homo sapiens (Human)).